The primary structure comprises 404 residues: Clavilactone A biosynthesis cluster protein Y (404 aa).

Functionally, part of the gene cluster that mediates the biosynthesis of clavilactone A, a meroterpenoid that features a unique benzo-fused ten-membered carbocyclic ring unit with an alpha,beta-epoxy-gamma-lactone moiety, forming an intriguing 10/5/3 tricyclic nested skeleton. ClaR, ClaS and ClaT are sufficient to produce clavilactone A and the function of claY, if any, has still to be identified. The biosynthesis begins with the prenyltransferase claS that transfers geranyl pyrophosphate (GPP) to hydroquinone to produces geranylhydroquinon. The cytochrome P450 monooxygenase claR then catalyzes the diradical coupling reaction between the intramolecular hydroquinone and allyl moieties to form the benzo-fused ten-membered carbocyclic ring unit of wigantol. Finally the cytochrome P450 monooxygenase claT exquisitely and stereoselectively assembles the alpha,beta-epoxy-gamma-lactone moiety, producing clavilactone A via arnebinol A. This is Clavilactone A biosynthesis cluster protein Y from Ampulloclitocybe clavipes (Club foot).